Reading from the N-terminus, the 635-residue chain is Chaperone protein HtpG (635 aa).

The interval 1–346 (MSQTTTTSAS…SADLPLNVSR (346 aa)) is a; substrate-binding. The tract at residues 347 to 563 (EILQESRDVR…QNELSPHLLR (217 aa)) is b. The interval 564 to 635 (MLKAAGQEAP…KRLNGLLLKA (72 aa)) is c.

This sequence belongs to the heat shock protein 90 family. As to quaternary structure, homodimer.

The protein localises to the cytoplasm. In terms of biological role, molecular chaperone. Has ATPase activity. This is Chaperone protein HtpG from Bordetella pertussis (strain Tohama I / ATCC BAA-589 / NCTC 13251).